A 94-amino-acid polypeptide reads, in one-letter code: Aspartyl/glutamyl-tRNA(Asn/Gln) amidotransferase subunit C (94 aa).

This sequence belongs to the GatC family. Heterotrimer of A, B and C subunits.

The catalysed reaction is L-glutamyl-tRNA(Gln) + L-glutamine + ATP + H2O = L-glutaminyl-tRNA(Gln) + L-glutamate + ADP + phosphate + H(+). The enzyme catalyses L-aspartyl-tRNA(Asn) + L-glutamine + ATP + H2O = L-asparaginyl-tRNA(Asn) + L-glutamate + ADP + phosphate + 2 H(+). Allows the formation of correctly charged Asn-tRNA(Asn) or Gln-tRNA(Gln) through the transamidation of misacylated Asp-tRNA(Asn) or Glu-tRNA(Gln) in organisms which lack either or both of asparaginyl-tRNA or glutaminyl-tRNA synthetases. The reaction takes place in the presence of glutamine and ATP through an activated phospho-Asp-tRNA(Asn) or phospho-Glu-tRNA(Gln). The sequence is that of Aspartyl/glutamyl-tRNA(Asn/Gln) amidotransferase subunit C from Carboxydothermus hydrogenoformans (strain ATCC BAA-161 / DSM 6008 / Z-2901).